A 338-amino-acid chain; its full sequence is Limbic system-associated membrane protein (338 aa).

The first 28 residues, 1 to 28, serve as a signal peptide directing secretion; the sequence is MVGRVQPDRKQLPLVLLRLLCLLPTGLP. 3 Ig-like C2-type domains span residues 29-122, 132-214, and 219-304; these read VRSV…PKTS, PKIS…VKVT, and PTIT…ASLV. N-linked (GlcNAc...) asparagine glycans are attached at residues asparagine 40 and asparagine 66. A disulfide bridge connects residues cysteine 53 and cysteine 111. Position 94 is a phosphotyrosine (tyrosine 94). N-linked (GlcNAc...) asparagine glycans are attached at residues asparagine 136 and asparagine 148. Cystine bridges form between cysteine 153–cysteine 197 and cysteine 239–cysteine 290. N-linked (GlcNAc...) asparagine glycosylation is found at asparagine 279, asparagine 287, and asparagine 300. Asparagine 315 carries GPI-anchor amidated asparagine; alternate lipidation. Asparagine 315 is a glycosylation site (N-linked (GlcNAc...) asparagine; alternate). A propeptide spans 316–338 (removed in mature form); sequence GSISLAVPLWLLAASLFCLLSKC.

It belongs to the immunoglobulin superfamily. IgLON family. Expressed mostly by neurons comprising limbic-associated cortical and subcortical regions that function in cognition, emotion, memory, and learning.

It localises to the cell membrane. Mediates selective neuronal growth and axon targeting. Contributes to the guidance of developing axons and remodeling of mature circuits in the limbic system. Essential for normal growth of the hippocampal mossy fiber projection. The chain is Limbic system-associated membrane protein (Lsamp) from Rattus norvegicus (Rat).